A 468-amino-acid polypeptide reads, in one-letter code: MPSAQDYIVRDIGLADFGRKEIAIAETEMPGLMAVRREYAASQPLKGAKIAGSLHMTIQTAVLIETLKALGADIRWVSCNIYSTQDHAAAAIAAAGIPVFAVKGETLTEYWDYTAKLFEWHDGGMPNMILDDGGDATMFVHAGLRAERGDAVFLDKPGSEEEEIFFALIKRMLKEKPQGWFAGLAESIKGVSEETTTGVHRLYLLAREGKLLFPAINVNDSVTKSKFDNLYGCRESLVDGIRRGTDVMMAGKVAMVAGFGDVGKGSAASLRNAGCRVLVSEVDPICALQAAMEGYEVTTMEDAAPRADIFVTATGNKDVITLDHMRAMKDRAIVCNIGHFDNEIQVAGLRNLKWTNIKPQVDEIEFADGHRIILLSEGRLVNLGNAMGHPSFVMSASFTNQTLAQIELWTNQGKYDRQVYTLPKALDEKVAALHLEKIGVKLTKLRPDQAAYIGVSENGPFKPDHYRY.

Positions 57, 132, and 194 each coordinate substrate. 195 to 197 (TTT) contacts NAD(+). Substrate is bound by residues Lys-224 and Asp-228. NAD(+) contacts are provided by residues Asn-229, 258 to 263 (GFGDVG), Glu-281, Asn-316, 337 to 339 (IGH), and Asn-382.

It belongs to the adenosylhomocysteinase family. It depends on NAD(+) as a cofactor.

It localises to the cytoplasm. It catalyses the reaction S-adenosyl-L-homocysteine + H2O = L-homocysteine + adenosine. The protein operates within amino-acid biosynthesis; L-homocysteine biosynthesis; L-homocysteine from S-adenosyl-L-homocysteine: step 1/1. May play a key role in the regulation of the intracellular concentration of adenosylhomocysteine. The chain is Adenosylhomocysteinase from Methylobacterium nodulans (strain LMG 21967 / CNCM I-2342 / ORS 2060).